A 332-amino-acid polypeptide reads, in one-letter code: MACPRPLSQCDHTPLPGPPAGHWPLPLSRRRREMKSNKEQRSAVFVILFALITILILYSSSSANEVFHYGSLRGRTRRPVNLRKWSITDGYIPILGNKTLPSRCGQCVIVTSSSHLLGTKLGPEIERAECTIRMNDAPTTGYSADVGNKTTFRVVAHSSVFHVLRRPQEFVNRTPETVFIFWGPPNKMQKPQGSLVRVIQRAGLVFPNMEAYAISLSRMRQFDDLFRSETGKDREKSHSWLSTGWFTMVIAVELCDHVHVYGMVPPDYCSLRPHLQRMPYHYYEPKGPDECVTYIQNENSRKGNHHRFITEKRVFSSWAQLYGITFSHPSWT.

The disordered stretch occupies residues 1–26 (MACPRPLSQCDHTPLPGPPAGHWPLP). The Cytoplasmic portion of the chain corresponds to 1–42 (MACPRPLSQCDHTPLPGPPAGHWPLPLSRRRREMKSNKEQRS). A helical; Signal-anchor for type II membrane protein membrane pass occupies residues 43 to 63 (AVFVILFALITILILYSSSSA). The Lumenal portion of the chain corresponds to 64-332 (NEVFHYGSLR…GITFSHPSWT (269 aa)). N97 carries an N-linked (GlcNAc...) asparagine glycan. C107 and C255 are joined by a disulfide.

It belongs to the glycosyltransferase 29 family.

Its subcellular location is the golgi apparatus membrane. The catalysed reaction is a ganglioside GM1b (d18:1(4E)) + CMP-N-acetyl-beta-neuraminate = a ganglioside GD1alpha (d18:1(4E)) + CMP + H(+). It catalyses the reaction N-acetyl-alpha-neuraminosyl-(2-&gt;3)-beta-D-galactosyl-(1-&gt;3)-N-acetyl-beta-D-glucosaminyl-(1-&gt;3)-beta-D-galactosyl-(1-&gt;4)-beta-D-glucosyl-(1&lt;-&gt;1')-N-acyl-sphing-4-enine + CMP-N-acetyl-beta-neuraminate = N-acetyl-alpha-neuraminosyl-(2-&gt;3)-beta-D-galactosyl-(1-&gt;3)-[N-acetyl-alpha-neuraminosyl-(2-&gt;6)]-N-acetyl-beta-D-glucosaminyl-(1-&gt;3)-beta-D-galactosyl-(1-&gt;4)-beta-D-glucosyl-(1&lt;-&gt;1')-N-acyl-sphing-4-enine + CMP + H(+). It carries out the reaction a globoside MSGG + CMP-N-acetyl-beta-neuraminate = a globoside DSGG + CMP + H(+). The enzyme catalyses a ganglioside GD1a (d18:1(4E)) + CMP-N-acetyl-beta-neuraminate = a ganglioside GT1aalpha (d18:1(4E)) + CMP + H(+). The catalysed reaction is a ganglioside GT1b (d18:1(4E)) + CMP-N-acetyl-beta-neuraminate = a ganglioside GQ1balpha (d18:1(4E)) + CMP + H(+). It catalyses the reaction 3-O-[alpha-Neu5Ac-(2-&gt;3)-beta-D-Gal-(1-&gt;3)-alpha-D-GalNAc]-L-Ser-[protein] + CMP-N-acetyl-beta-neuraminate = a 3-O-{alpha-Neu5Ac-(2-&gt;3)-beta-D-Gal-(1-&gt;3)-[alpha-Neu5Ac-(2-&gt;6)]-alpha-D-GalNAc}-L-seryl-[protein] + CMP + H(+). It carries out the reaction 3-O-[alpha-Neu5Ac-(2-&gt;3)-beta-D-Gal-(1-&gt;3)-alpha-D-GalNAc]-L-Thr-[protein] + CMP-N-acetyl-beta-neuraminate = a 3-O-{alpha-Neu5Ac-(2-&gt;3)-beta-D-Gal-(1-&gt;3)-[alpha-Neu5Ac-(2-&gt;6)]-alpha-D-GalNAc}-L-threonyl-[protein] + CMP + H(+). Functionally, transfers the sialyl group (N-acetyl-alpha-neuraminyl or NeuAc) from CMP-NeuAc onto glycoproteins and glycolipids, forming an alpha-2,6-linkage. Produces branched type disialyl structures by transfer of a sialyl group onto the GalNAc or GlcNAc residue inside backbone core chains having a terminal sialic acid with an alpha-2,3-linkage on Gal. ST6GalNAcVI prefers glycolipids to glycoproteins, predominantly catalyzing the biosynthesis of ganglioside GD1alpha from GM1b. Besides GMb1, MSGG and other glycolipids, it shows activity towards sialyl Lc4Cer generating disialyl Lc4Cer, which can lead to the synthesis of disialyl Lewis a (Le(a)), suggested to be a cancer-associated antigen. Also has activity toward GD1a and GT1b, and can generate DSGG (disialylgalactosylgloboside) from MSGG (monosialylgalactosylgloboside). The protein is Alpha-N-acetylgalactosaminide alpha-2,6-sialyltransferase 6 (ST6GALNAC6) of Bos taurus (Bovine).